Consider the following 552-residue polypeptide: Mothers against decapentaplegic homolog 4 (552 aa).

The interval 1 to 322 (MDNMSITNTP…PISNHPAPEY (322 aa)) is mediates interaction with ZBTB7A. The region spanning 18-142 (SIVHSLMCHR…YERVVSPGID (125 aa)) is the MH1 domain. The residue at position 37 (Lys37) is an N6-acetyllysine. The required for interaction with TSC22D1 stretch occupies residues 44–69 (VKKLKEKKDELDSLITAITTNGAHPS). Cys71 serves as a coordination point for Zn(2+). Lys113 is covalently cross-linked (Glycyl lysine isopeptide (Lys-Gly) (interchain with G-Cter in SUMO2)). Zn(2+) is bound by residues Cys115, Cys127, and His132. The tract at residues 264-297 (STTTWTGSRTAPYPPNLPHHQNGHLQHHPPMPPH) is disordered. The SAD stretch occupies residues 275–320 (PYPPNLPHHQNGHLQHHPPMPPHPGHYWPVHNELAFQPPISNHPAP). An MH2 domain is found at 323-552 (WCSIAYFEMD…MPIADPQPLD (230 aa)). Residues Lys428 and Lys507 each carry the N6-acetyllysine modification. Lys519 participates in a covalent cross-link: Glycyl lysine isopeptide (Lys-Gly) (interchain with G-Cter in ubiquitin).

Belongs to the dwarfin/SMAD family. In terms of assembly, monomer; in the absence of TGF-beta activation. Heterotrimer; on TGF-beta activation. Heterotrimer composed of two molecules of a C-terminally phosphorylated R-SMAD molecule, SMAD2 or SMAD3, and one molecule of SMAD4 to form the transcriptional active SMAD2/SMAD3-SMAD4 complex. Found in a ternary complex composed of SMAD4, STK11/LKB1 and STK11IP. Found in a complex with SMAD1 and YY1. Identified in a complex that contains at least ZNF451, SMAD2, SMAD3 and SMAD4. Interacts with ATF2, COPS5, DACH1, MSG1, SKI, STK11/LKB1, STK11IP and TRIM33. Associates with ZNF423 or ZNF521 in response to BMP2 leading to activate transcription of BMP target genes. Interacts with USP9X. Interacts with RBPMS. Interacts with WWTR1 (via coiled-coil domain). Interacts with CITED1 and CITED2. Interacts with PDPK1 (via PH domain). Interacts with VPS39; this interaction affects heterodimer formation with SMAD3, but not with SMAD2, and leads to inhibition of SMAD3-dependent transcription activation. Interactions with VPS39 and SMAD2 may be mutually exclusive. Interacts (via MH2 domain) with ZNF451 (via N-terminal zinc-finger domains). Interacts with ZC3H3. Interacts weakly with ZNF8. Interacts with NUP93 and IPO7; translocates SMAD4 to the nucleus through the NPC upon BMP7 stimulation resulting in activation of SMAD4 signaling. Interacts with CREB3L1, the interaction takes place upon TGFB1 induction and SMAD4 acts as a CREB3L1 coactivator to induce the expression of genes involved in the assembly of collagen extracellular matrix. Interacts with DLX1. Interacts with ZBTB7A; the interaction is direct and stimulated by TGFB1. Interacts with CREBBP; the recruitment of this transcriptional coactivator is negatively regulated by ZBTB7A. Interacts with EP300; the interaction with this transcriptional coactivator is negatively regulated by ZBTB7A. Interacts with HDAC1. Interacts (via MH2 domain) with ZMIZ1 (via SP-RING-type domain); in the TGF-beta signaling pathway increases the activity of the SMAD3/SMAD4 transcriptional complex. Interacts (via N-terminus) with TSC22D1. Phosphorylated by PDPK1. Post-translationally, monoubiquitinated on Lys-519 by E3 ubiquitin-protein ligase TRIM33. Monoubiquitination hampers its ability to form a stable complex with activated SMAD2/3 resulting in inhibition of TGF-beta/BMP signaling cascade. Deubiquitination by USP9X restores its competence to mediate TGF-beta signaling.

Its subcellular location is the cytoplasm. It is found in the nucleus. Common SMAD (co-SMAD) is the coactivator and mediator of signal transduction by TGF-beta (transforming growth factor). Component of the heterotrimeric SMAD2/SMAD3-SMAD4 complex that forms in the nucleus and is required for the TGF-mediated signaling. Promotes binding of the SMAD2/SMAD4/FAST-1 complex to DNA and provides an activation function required for SMAD1 or SMAD2 to stimulate transcription. Component of the multimeric SMAD3/SMAD4/JUN/FOS complex which forms at the AP1 promoter site; required for synergistic transcriptional activity in response to TGF-beta. Acts synergistically with SMAD1 and YY1 in bone morphogenetic protein (BMP)-mediated cardiac-specific gene expression. Binds to SMAD binding elements (SBEs) (5'-GTCT/AGAC-3') within BMP response element (BMPRE) of cardiac activating regions. May act as a tumor suppressor. Positively regulates PDPK1 kinase activity by stimulating its dissociation from the 14-3-3 protein YWHAQ which acts as a negative regulator. In muscle physiology, plays a central role in the balance between atrophy and hypertrophy. When recruited by MSTN, promotes atrophy response via phosphorylated SMAD2/4. MSTN decrease causes SMAD4 release and subsequent recruitment by the BMP pathway to promote hypertrophy via phosphorylated SMAD1/5/8. This is Mothers against decapentaplegic homolog 4 (SMAD4) from Sus scrofa (Pig).